Reading from the N-terminus, the 117-residue chain is Large ribosomal subunit protein uL24 (117 aa).

It belongs to the universal ribosomal protein uL24 family. Part of the 50S ribosomal subunit.

One of two assembly initiator proteins, it binds directly to the 5'-end of the 23S rRNA, where it nucleates assembly of the 50S subunit. In terms of biological role, one of the proteins that surrounds the polypeptide exit tunnel on the outside of the subunit. The protein is Large ribosomal subunit protein uL24 of Nostoc punctiforme (strain ATCC 29133 / PCC 73102).